Reading from the N-terminus, the 1354-residue chain is Tensin homolog (1354 aa).

The Phosphatase tensin-type domain occupies 38 to 207 (MKDRKEGVQV…GYFSSLLSGR (170 aa)). The active-site Phosphocysteine intermediate is the Cys144. Residues 212-337 (SDPLYLHNII…VTVELVVSHT (126 aa)) form the C2 tensin-type domain. Disordered stretches follow at residues 380–442 (EYSE…DVVP), 597–616 (STLQRRPKPPARSGSYRTLN), 638–660 (SNTAPLPPPRRQEQHAGTRSVQL), 692–720 (DVRGGQQQQQEQHNASNDFNFSNTLNNTP), 734–754 (SVTTPRNHHFSTPSREQEADA), 794–879 (AANN…DRQR), and 1015–1035 (NGERGGSGHAAGGGGGGHNGY). The span at 391–401 (SSKSANPINNN) shows a compositional bias: polar residues. The segment covering 408 to 417 (VGPPVPPKPS) has biased composition (pro residues). Polar residues-rich tracts occupy residues 704 to 720 (HNASNDFNFSNTLNNTP), 734 to 747 (SVTTPRNHHFSTPS), and 794 to 804 (AANNDENQHNL). Basic and acidic residues predominate over residues 821-843 (AEFRREEERLRNTRSPYGEERWR). Positions 1017 to 1033 (ERGGSGHAAGGGGGGHN) are enriched in gly residues. An SH2 domain is found at 1083-1187 (WYKPTISREQ…ALPTKLVLPD (105 aa)). A PTB domain is found at 1209-1353 (ACNVVYVGSV…NKVMLAQKNR (145 aa)).

It belongs to the PTEN phosphatase protein family. May interact (via SH2 domain) with receptor svh-2 (when tyrosine-phosphorylated). May interact (via C-terminus) with integrin pat-3. Expressed in ventral motor neurons, including ventral and dorsal D-type neurons, and in a subset of cells in the head.

Its subcellular location is the cell projection. The protein resides in the axon. It catalyses the reaction O-phospho-L-tyrosyl-[protein] + H2O = L-tyrosyl-[protein] + phosphate. Its function is as follows. Probable phosphatase which regulates axon regeneration after injury by linking the svh-2 and integrin signaling pathways. Not involved in axon regeneration after injury. In Caenorhabditis elegans, this protein is Tensin homolog.